We begin with the raw amino-acid sequence, 172 residues long: Adenine phosphoribosyltransferase (172 aa).

It belongs to the purine/pyrimidine phosphoribosyltransferase family. As to quaternary structure, homodimer.

Its subcellular location is the cytoplasm. The catalysed reaction is AMP + diphosphate = 5-phospho-alpha-D-ribose 1-diphosphate + adenine. Its pathway is purine metabolism; AMP biosynthesis via salvage pathway; AMP from adenine: step 1/1. Functionally, catalyzes a salvage reaction resulting in the formation of AMP, that is energically less costly than de novo synthesis. The protein is Adenine phosphoribosyltransferase of Picosynechococcus sp. (strain ATCC 27264 / PCC 7002 / PR-6) (Agmenellum quadruplicatum).